A 550-amino-acid chain; its full sequence is Acidic amino acid decarboxylase GADL1 (550 aa).

N6-(pyridoxal phosphate)lysine is present on Lys-362.

The protein belongs to the group II decarboxylase family. Homodimer. The cofactor is pyridoxal 5'-phosphate. In terms of tissue distribution, expressed in skeletal muscles and kidney (at protein level). Expressed in skeletal muscle and weakly in brain. Not expressed in liver or kidney. Expressed in brain, olfactory bulb, liver, muscle and kidney with the highest expression in olfactory bulb and almost not detected in liver (at protein level).

It carries out the reaction L-aspartate + H(+) = beta-alanine + CO2. It catalyses the reaction 3-sulfino-L-alanine + H(+) = hypotaurine + CO2. The catalysed reaction is L-cysteate + H(+) = taurine + CO2. Activated weakly by 0.2-0.4 mM Li(+). Inhibited by bis-carboxymethyl-trithiocarbonate, ethylxanthogenacetic acid and 2,5-disulfoaniline. Functionally, catalyzes the decarboxylation of L-aspartate, 3-sulfino-L-alanine (cysteine sulfinic acid), and L-cysteate to beta-alanine, hypotaurine and taurine, respectively. The preferred substrate is L-aspartate. Does not exhibit any decarboxylation activity toward glutamate. In Mus musculus (Mouse), this protein is Acidic amino acid decarboxylase GADL1.